The sequence spans 101 residues: Large ribosomal subunit protein uL24 (101 aa).

It belongs to the universal ribosomal protein uL24 family. In terms of assembly, part of the 50S ribosomal subunit.

One of two assembly initiator proteins, it binds directly to the 5'-end of the 23S rRNA, where it nucleates assembly of the 50S subunit. Functionally, one of the proteins that surrounds the polypeptide exit tunnel on the outside of the subunit. In Streptococcus gordonii (strain Challis / ATCC 35105 / BCRC 15272 / CH1 / DL1 / V288), this protein is Large ribosomal subunit protein uL24.